We begin with the raw amino-acid sequence, 143 residues long: Large ribosomal subunit protein uL11 (143 aa).

It belongs to the universal ribosomal protein uL11 family. As to quaternary structure, part of the ribosomal stalk of the 50S ribosomal subunit. Interacts with L10 and the large rRNA to form the base of the stalk. L10 forms an elongated spine to which L12 dimers bind in a sequential fashion forming a multimeric L10(L12)X complex. Post-translationally, one or more lysine residues are methylated.

Its function is as follows. Forms part of the ribosomal stalk which helps the ribosome interact with GTP-bound translation factors. This Paraburkholderia phytofirmans (strain DSM 17436 / LMG 22146 / PsJN) (Burkholderia phytofirmans) protein is Large ribosomal subunit protein uL11.